Consider the following 2159-residue polypeptide: ATP-binding cassette sub-family A member 7 (2159 aa).

The chain crosses the membrane as a helical span at residues P22–V42. Residues R43–S546 are Extracellular-facing. Cysteines 75 and 222 form a disulfide. Residue N309 is glycosylated (N-linked (GlcNAc...) asparagine). 6 consecutive transmembrane segments (helical) span residues L547 to V567, L590 to V610, V623 to L643, L652 to V672, L678 to C698, and A732 to C752. The ABC transporter 1 domain occupies V804 to V1035. Residue G838–T845 participates in ATP binding. The chain crosses the membrane as a helical span at residues T846–G866. Disordered stretches follow at residues V1042–P1088 and G1172–P1192. Positions H1044–G1061 are enriched in basic and acidic residues. A compositionally biased stretch (polar residues) spans N1062–A1081. The helical transmembrane segment at V1246 to F1266 threads the bilayer. The Extracellular segment spans residues G1267–L1551. A disulfide bridge connects residues C1359 and C1373. The next 5 membrane-spanning stretches (helical) occupy residues V1552 to I1572, F1598 to A1618, L1635 to F1655, V1663 to L1683, and I1743 to L1763. In terms of domain architecture, ABC transporter 2 spans L1807–R2039. Residue G1841 to T1848 participates in ATP binding. The interval Q2118 to I2159 is disordered. The span at G2119 to E2133 shows a compositional bias: acidic residues.

Belongs to the ABC transporter superfamily. ABCA family. Post-translationally, N-glycosylated. As to expression, widely expressed with higher expression in brain, lung, adrenal gland, spleen and hematopoietic tissues (at protein level). In the brain, expressed in cortex, cerebellum, hippocampus, olfactory bulb, neurons, astrocytes and microglia (at protein level). Also expressed in adipocytes and macrophages (at protein level). Expressed in thymocytes (at protein level). Highly expressed in spleen and hematopoietic tissues. Expressed in brain, lung, macrophages, microglia, oligodendrocytes and neurons.

The protein resides in the cell membrane. The protein localises to the golgi apparatus membrane. Its subcellular location is the early endosome membrane. It is found in the cytoplasm. It localises to the cell projection. The protein resides in the ruffle membrane. The protein localises to the phagocytic cup. Functionally, probable ATP-binding cassette (ABC) transporter that plays a role in lipid homeostasis and macrophage-mediated phagocytosis. Binds APOA1 and may function in apolipoprotein-mediated phospholipid efflux from cells. May also mediate cholesterol efflux. May regulate cellular ceramide homeostasis during keratinocyte differentiation. Involved in lipid raft organization and CD1D localization on thymocytes and antigen-presenting cells, which plays an important role in natural killer T-cell development and activation. Plays a role in phagocytosis of apoptotic cells by macrophages. Macrophage phagocytosis is stimulated by APOA1 or APOA2, probably by stabilization of ABCA7. Also involved in phagocytic clearance of amyloid-beta by microglia cells and macrophages. Further limits amyloid-beta production by playing a role in the regulation of amyloid-beta A4 precursor protein (APP) endocytosis and/or processing. The sequence is that of ATP-binding cassette sub-family A member 7 (Abca7) from Mus musculus (Mouse).